Consider the following 505-residue polypeptide: GDP-Man:Man(3)GlcNAc(2)-PP-Dol alpha-1,2-mannosyltransferase (505 aa).

At 1-4 (MSTM) the chain is on the lumenal side. The chain crosses the membrane as a helical span at residues 5–25 (LWVVVAAVLLFVLPVVRVPML). The Cytoplasmic segment spans residues 26-130 (DLTRRNIIRW…KWVDGSTWKH (105 aa)). The segment at residues 131–151 (LTLVGQAMGSMLLTIEALLRF) is an intramembrane region (helical). At 152–374 (VPDIWLDTMG…FGINAMWNEH (223 aa)) the chain is on the cytoplasmic side. Positions 375-395 (FGIAVVEYAAAGLISLVHASA) form an intramembrane region, helical. At 396–505 (GPLLDIIVPW…EHKTSRLGSN (110 aa)) the chain is on the cytoplasmic side.

Belongs to the glycosyltransferase group 1 family.

The protein resides in the endoplasmic reticulum membrane. It catalyses the reaction an alpha-D-Man-(1-&gt;3)-[alpha-D-Man-(1-&gt;6)]-beta-D-Man-(1-&gt;4)-beta-D-GlcNAc-(1-&gt;4)-alpha-D-GlcNAc-diphospho-di-trans,poly-cis-dolichol + 2 GDP-alpha-D-mannose = an alpha-D-Man-(1-&gt;2)-alpha-D-Man-(1-&gt;2)-alpha-D-Man-(1-&gt;3)-[alpha-D-Man-(1-&gt;6)]-beta-D-Man-(1-&gt;4)-beta-D-GlcNAc-(1-&gt;4)-alpha-D-GlcNAc-diphospho-di-trans,poly-cis-dolichol + 2 GDP + 2 H(+). The protein operates within protein modification; protein glycosylation. Its function is as follows. GDP-Man:Man(3)GlcNAc(2)-PP-Dol alpha-1,2-mannosyltransferase that operates in the biosynthetic pathway of dolichol-linked oligosaccharides, the glycan precursors employed in protein asparagine (N)-glycosylation. The assembly of dolichol-linked oligosaccharides begins on the cytosolic side of the endoplasmic reticulum membrane and finishes in its lumen. The sequential addition of sugars to dolichol pyrophosphate produces dolichol-linked oligosaccharides containing fourteen sugars, including two GlcNAcs, nine mannoses and three glucoses. Once assembled, the oligosaccharide is transferred from the lipid to nascent proteins by oligosaccharyltransferases. Catalyzes, on the cytoplasmic face of the endoplasmic reticulum, the addition of the fourth and fifth mannose residues to the dolichol-linked oligosaccharide chain, to produce Man(5)GlcNAc(2)-PP-dolichol core oligosaccharide. This is GDP-Man:Man(3)GlcNAc(2)-PP-Dol alpha-1,2-mannosyltransferase (ALG11) from Candida glabrata (strain ATCC 2001 / BCRC 20586 / JCM 3761 / NBRC 0622 / NRRL Y-65 / CBS 138) (Yeast).